Reading from the N-terminus, the 1275-residue chain is MAPSEFQPSLWESVTSLIRSAQEKNVDPLHWALQLRLTLASAGISLPSPDLAQFLVTHIFWENHSPLSWKLLEKAISVNIVPPLLVLALLSPRVIPNRKLHPAAYRLYMELLKRHAFSFMPLIRAPGYHKTMNSIDDILHLSETFGVQDQEPGSILLAFVFSIVWELLDASLDEEGLLELTSNKRSKWPSSPHDMDLDGLENSVKRNENHDALEKANTEMAIELIQEFLQNKVTSRILHLASQNMESKTIPRGEFHAIVSSGSKLALTSDSALWLPIDLFFEDIMDGTQAAAASAVENLTGLVKALQAANSTSWHDAFLALWLAALRLVQRENLCLRYCFFMHMLEILSEERDPIEGPVPRTDTFLCVLLSVTPLAVANIIEEEESQWIDQTSSSPSNQWKEKKGKCRQGLINSLQQLGDYESLLTPPRSVQSVANQAAAKAIMFISGITNSNGSYENTSMSESASGCCKVRFSLFTLKMFVVMGVYLLCNISCWSLVMKGSPLTPSLTNSLITTPASSLAEIEKMYEVATTGSEDEKIAVASILCGASLFRGWSIQEHVIIFIVTLLSPPAPADLSGSYSHLINSAPFLNVLLVGISPIDCVHIFSLHGVVPLLAGALMPICEAFGSGVPNITWTLPTGELISSHAVFSTAFTLLLRLWRFDHPPLDYVLGDVPPVGPQPSPEYLLLVRNCRLECFGKSPKDRMARRRFSKVIDISVDPIFMDSFPRLKQWYRQHQECMASILSELKTGSPVHHIVDSLLSMMFKKANKGGSQSLTPSSGSSSLSTSGGDDSSDQLKLPAWDILEAAPFVLDAALTACAHGSLSPRELATGLKILADFLPATLGTMVSYFSSEVTRGLWKPVSMNGTDWPSPAANLASVEQQIEKILAATGVDVPRLPADGISAATLPLPLAALVSLTITYKLDKATERFLVLVGPALDSLAAACPWPCMPIVTSLWTQKVKRWSDFLIFSASRTVFHHNRDAVIQLLRSCFTCTLGLTPTSQLCSYGGVGALLGHGFGSRYSGGISTAAPGILYIKVHRSIRDVMFLTEEILSLLMFSVKSIATRELPAGQAEKLKKTKDGSRYGIGQVSLSLAMRRVKLAASLGASLVWISGGLNLVQALIKETLPSWFISVHGEEDELGGMVPMLRGYALAYFAILSSAFAWGVDSSYPASKRRPRVLWLHLEFMVSALEGKISLGCDWATWQAYVTGFVSLMVQCTPAWVLEVDVEVIKRLSKSLRQWNEQDLALALLCAGGLGTMGAATELIVETCHQH.

Residues 772 to 791 (GSQSLTPSSGSSSLSTSGGD) are compositionally biased toward low complexity. Residues 772–792 (GSQSLTPSSGSSSLSTSGGDD) are disordered.

It belongs to the Mediator complex subunit 33 family. In terms of assembly, component of the Mediator complex. As to expression, ubiquitous.

It is found in the nucleus. Functionally, component of the Mediator complex, a coactivator involved in the regulated transcription of nearly all RNA polymerase II-dependent genes. Mediator functions as a bridge to convey information from gene-specific regulatory proteins to the basal RNA polymerase II transcription machinery. The Mediator complex, having a compact conformation in its free form, is recruited to promoters by direct interactions with regulatory proteins and serves for the assembly of a functional preinitiation complex with RNA polymerase II and the general transcription factors. Involved in the repression of phenylpropanoid biosynthesis. May compete with MED33B for common binding partners or for occupancy in Mediator. In Arabidopsis thaliana (Mouse-ear cress), this protein is Mediator of RNA polymerase II transcription subunit 33B (MED33B).